The following is a 134-amino-acid chain: Putative cytochrome c oxidase subunit 6b-like (134 aa).

The tract at residues 1–61 is disordered; the sequence is MSSAQMDPHD…DSGRETDAAV (61 aa). Basic and acidic residues-rich tracts occupy residues 7 to 19 and 44 to 61; these read DPHDKMRSRDISK and ATFRAKRGDSGRETDAAV. Positions 71–114 constitute a CHCH domain; sequence TRHCFNRFMQYHKCIEKNGRDANDCNNLRDYVRSICPEELVSKI. The short motif at 74–84 is the Cx9C motif element; it reads CFNRFMQYHKC. 2 cysteine pairs are disulfide-bonded: Cys-74–Cys-106 and Cys-84–Cys-95. The Cx10C motif signature appears at 95 to 106; that stretch reads CNNLRDYVRSIC.

Belongs to the cytochrome c oxidase subunit 6B (TC 3.D.4.8) family.

The protein localises to the mitochondrion. This protein is one of the nuclear-coded polypeptide chains of cytochrome c oxidase, the terminal oxidase in mitochondrial electron transport. This protein may be one of the heme-binding subunits of the oxidase. The protein is Putative cytochrome c oxidase subunit 6b-like of Arabidopsis thaliana (Mouse-ear cress).